Here is a 356-residue protein sequence, read N- to C-terminus: Putative methylthioribose-1-phosphate isomerase (356 aa).

Substrate is bound by residues 57-59, Arg100, and Gln206; that span reads RGA. Asp247 functions as the Proton donor in the catalytic mechanism. Residue 257 to 258 participates in substrate binding; that stretch reads NK.

This sequence belongs to the eIF-2B alpha/beta/delta subunits family. MtnA subfamily.

The catalysed reaction is 5-(methylsulfanyl)-alpha-D-ribose 1-phosphate = 5-(methylsulfanyl)-D-ribulose 1-phosphate. In terms of biological role, catalyzes the interconversion of methylthioribose-1-phosphate (MTR-1-P) into methylthioribulose-1-phosphate (MTRu-1-P). In Pyrococcus abyssi (strain GE5 / Orsay), this protein is Putative methylthioribose-1-phosphate isomerase (aIF-2BI).